Reading from the N-terminus, the 1641-residue chain is Lysine-specific demethylase 6B (1641 aa).

4 disordered regions span residues 42 to 89 (LPGG…LHGK), 188 to 682 (YGAK…PLED), 704 to 808 (LDES…LLKS), and 824 to 1085 (GAAV…VSRA). The span at 214 to 223 (LSGPSGEEGL) shows a compositional bias: low complexity. At Ser-224 the chain carries Phosphoserine. A compositionally biased stretch (pro residues) spans 242–268 (PGLPLPPPPPPPPPPPPPPPPPPPPLP). Basic and acidic residues predominate over residues 293–309 (GPERKGSAPPERQEQRH). Low complexity predominate over residues 312–326 (PHSYPYPAPAYSAHP). Positions 361–372 (DLRESRVQRSRM) are enriched in basic and acidic residues. The segment covering 396-415 (PGTSSSSSSSSSSNNTGLRG) has biased composition (low complexity). Residues 467–488 (PGTPSSPPPPCPRLLRPPPPPA) are compositionally biased toward pro residues. The segment covering 552–568 (TTTSSSSSSNSHSSSPT) has biased composition (low complexity). Composition is skewed to pro residues over residues 597–613 (QDPP…PAPP) and 645–660 (GPPP…PVPP). A compositionally biased stretch (basic and acidic residues) spans 704–713 (LDESIRKEEE). The span at 743-766 (TAPATTTAAPTTATTTTTTTTTTT) shows a compositional bias: low complexity. The span at 774 to 801 (PPALPPPPPLAKFPPPPQPQPPPPPPAS) shows a compositional bias: pro residues. Residues 855 to 879 (VAPSAQGSPKPSVSSSSQFSTSGGP) show a composition bias toward low complexity. The segment covering 891–908 (APGPVTPAQLPPPLPLPP) has biased composition (pro residues). A compositionally biased stretch (basic and acidic residues) spans 918–931 (EISRACETLVERVG). A compositionally biased stretch (basic residues) spans 974 to 987 (GKRRQKEHRRHRRA). Basic and acidic residues predominate over residues 988-1001 (CRDSVGRRPREGRA). The span at 1002–1014 (KAKAKAPKEKSRR) shows a compositional bias: basic residues. Residues 1047–1066 (APAPPPAPAPAAQPTPPSAP) show a composition bias toward pro residues. Lys-1107 is covalently cross-linked (Glycyl lysine isopeptide (Lys-Gly) (interchain with G-Cter in SUMO2)). The tract at residues 1286–1323 (FQESLQEERESEDEESEEPDSTTGTSPSSAPDPKNHHI) is disordered. Positions 1294–1305 (RESEDEESEEPD) are enriched in acidic residues. The segment covering 1306–1317 (STTGTSPSSAPD) has biased composition (low complexity). The JmjC domain occupies 1337-1500 (RWKPQLQELL…YQLALERYEW (164 aa)). Fe cation contacts are provided by His-1388, Glu-1390, and His-1468. Zn(2+) contacts are provided by Cys-1573, Cys-1576, Cys-1600, and Cys-1603.

The protein belongs to the UTX family. In terms of assembly, interacts with TLE1. Component of the MLL4 complex, at least composed of KMT2B/MLL4, ASH2L, RBBP5, WDR5, and KDM6B. Interacts with TBX21, SMARCA4, SMARCC1 and SMARCC2. The cofactor is L-ascorbate. Requires Fe(2+) as cofactor.

The protein localises to the nucleus. It carries out the reaction N(6),N(6),N(6)-trimethyl-L-lysyl(27)-[histone H3] + 2 2-oxoglutarate + 2 O2 = N(6)-methyl-L-lysyl(27)-[histone H3] + 2 formaldehyde + 2 succinate + 2 CO2. Functionally, histone demethylase that specifically demethylates 'Lys-27' of histone H3, thereby playing a central role in histone code. Demethylates trimethylated and dimethylated H3 'Lys-27'. Plays a central role in regulation of posterior development, by regulating HOX gene expression. Involved in inflammatory response by participating in macrophage differentiation in case of inflammation by regulating gene expression and macrophage differentiation. Plays a demethylase-independent role in chromatin remodeling to regulate T-box family member-dependent gene expression by acting as a link between T-box factors and the SMARCA4-containing SWI/SNF remodeling complex. The protein is Lysine-specific demethylase 6B (Kdm6b) of Mus musculus (Mouse).